The chain runs to 197 residues: Probable nicotinate-nucleotide adenylyltransferase (197 aa).

This sequence belongs to the NadD family.

It catalyses the reaction nicotinate beta-D-ribonucleotide + ATP + H(+) = deamido-NAD(+) + diphosphate. The protein operates within cofactor biosynthesis; NAD(+) biosynthesis; deamido-NAD(+) from nicotinate D-ribonucleotide: step 1/1. Functionally, catalyzes the reversible adenylation of nicotinate mononucleotide (NaMN) to nicotinic acid adenine dinucleotide (NaAD). This is Probable nicotinate-nucleotide adenylyltransferase from Neisseria meningitidis serogroup C (strain 053442).